A 100-amino-acid chain; its full sequence is NADH-quinone oxidoreductase subunit K (100 aa).

Helical transmembrane passes span 4–24, 28–48, and 60–80; these read LQHGLILAAILFVLGLTGLII, LLFMLISLEVMINAAALAFVV, and VMYILAITLAAAEASIGLALL.

The protein belongs to the complex I subunit 4L family. NDH-1 is composed of 13 different subunits. Subunits NuoA, H, J, K, L, M, N constitute the membrane sector of the complex.

It is found in the cell inner membrane. The enzyme catalyses a quinone + NADH + 5 H(+)(in) = a quinol + NAD(+) + 4 H(+)(out). Functionally, NDH-1 shuttles electrons from NADH, via FMN and iron-sulfur (Fe-S) centers, to quinones in the respiratory chain. The immediate electron acceptor for the enzyme in this species is believed to be ubiquinone. Couples the redox reaction to proton translocation (for every two electrons transferred, four hydrogen ions are translocated across the cytoplasmic membrane), and thus conserves the redox energy in a proton gradient. This chain is NADH-quinone oxidoreductase subunit K, found in Yersinia enterocolitica serotype O:8 / biotype 1B (strain NCTC 13174 / 8081).